A 194-amino-acid chain; its full sequence is dTTP/UTP pyrophosphatase (194 aa).

Asp73 serves as the catalytic Proton acceptor.

The protein belongs to the Maf family. YhdE subfamily. A divalent metal cation serves as cofactor.

It is found in the cytoplasm. The catalysed reaction is dTTP + H2O = dTMP + diphosphate + H(+). It carries out the reaction UTP + H2O = UMP + diphosphate + H(+). In terms of biological role, nucleoside triphosphate pyrophosphatase that hydrolyzes dTTP and UTP. May have a dual role in cell division arrest and in preventing the incorporation of modified nucleotides into cellular nucleic acids. The protein is dTTP/UTP pyrophosphatase of Clostridium botulinum (strain Okra / Type B1).